A 292-amino-acid polypeptide reads, in one-letter code: Phosphoribosylglycinamide formyltransferase, chloroplastic (292 aa).

A chloroplast-targeting transit peptide spans 1–65 (MESRVLFSSQ…KAASSTPQIV (65 aa)). Residue 88–90 (GSN) coordinates N(1)-(5-phospho-beta-D-ribosyl)glycinamide. Residues 167 to 170 (LKLI) and Asn184 contribute to the (6R)-10-formyltetrahydrofolate site. The active-site Proton donor is the His186. (6R)-10-formyltetrahydrofolate is bound at residue Asp227. Glu256 lines the N(1)-(5-phospho-beta-D-ribosyl)glycinamide pocket.

Belongs to the GART family.

It is found in the plastid. Its subcellular location is the chloroplast. It carries out the reaction N(1)-(5-phospho-beta-D-ribosyl)glycinamide + (6R)-10-formyltetrahydrofolate = N(2)-formyl-N(1)-(5-phospho-beta-D-ribosyl)glycinamide + (6S)-5,6,7,8-tetrahydrofolate + H(+). It functions in the pathway purine metabolism; IMP biosynthesis via de novo pathway; N(2)-formyl-N(1)-(5-phospho-D-ribosyl)glycinamide from N(1)-(5-phospho-D-ribosyl)glycinamide (10-formyl THF route): step 1/1. In Arabidopsis thaliana (Mouse-ear cress), this protein is Phosphoribosylglycinamide formyltransferase, chloroplastic (PUR3).